A 142-amino-acid polypeptide reads, in one-letter code: Nitrogen fixation protein NifU 2 (142 aa).

Residues 1-36 (MKDLFDESLTLDTGSAAPGTAPGRPRRRQPAGGKAP) form a disordered region. The segment covering 14–23 (GSAAPGTAPG) has biased composition (low complexity).

The protein belongs to the NifU family.

May be involved in the formation or repair of [Fe-S] clusters present in iron-sulfur proteins. This Rhodobacter capsulatus (Rhodopseudomonas capsulata) protein is Nitrogen fixation protein NifU 2 (nifU2).